Reading from the N-terminus, the 880-residue chain is Alanine--tRNA ligase (880 aa).

Zn(2+) contacts are provided by His-568, His-572, Cys-670, and His-674.

The protein belongs to the class-II aminoacyl-tRNA synthetase family. It depends on Zn(2+) as a cofactor.

It localises to the cytoplasm. It carries out the reaction tRNA(Ala) + L-alanine + ATP = L-alanyl-tRNA(Ala) + AMP + diphosphate. Its function is as follows. Catalyzes the attachment of alanine to tRNA(Ala) in a two-step reaction: alanine is first activated by ATP to form Ala-AMP and then transferred to the acceptor end of tRNA(Ala). Also edits incorrectly charged Ser-tRNA(Ala) and Gly-tRNA(Ala) via its editing domain. This chain is Alanine--tRNA ligase, found in Exiguobacterium sibiricum (strain DSM 17290 / CCUG 55495 / CIP 109462 / JCM 13490 / 255-15).